The chain runs to 724 residues: Hyaluronan mediated motility receptor (724 aa).

Disordered stretches follow at residues 1 to 22 (MSFP…PSPG) and 40 to 81 (KSQR…QKND). Ser20 is subject to Phosphoserine. 2 stretches are compositionally biased toward basic and acidic residues: residues 46–60 (QQKE…DKDT) and 70–81 (KSSESKESQKND). N-linked (GlcNAc...) asparagine glycans are attached at residues Asn133, Asn477, Asn567, and Asn588. The interval 365–546 (EEMVKEKNLF…ITDLQNQLKQ (182 aa)) is required for interaction with FAM83D. Hyaluronic acid-binding regions lie at residues 635–645 (KQKIKHVVKLK) and 657–666 (KLRCQLAKKK). A Phosphothreonine modification is found at Thr703.

Interacts with ANKRD26. Interacts with DYNLL1. Interacts with FAM83D/CHICA. As to expression, expressed in testis. Expressed in the breast.

Its subcellular location is the cell surface. It is found in the cytoplasm. It localises to the cytoskeleton. The protein resides in the spindle. In terms of biological role, receptor for hyaluronic acid (HA). Involved in cell motility. When hyaluronan binds to HMMR, the phosphorylation of a number of proteins, including PTK2/FAK1 occurs. May also be involved in cellular transformation and metastasis formation, and in regulating extracellular-regulated kinase (ERK) activity. May act as a regulator of adipogenisis. The sequence is that of Hyaluronan mediated motility receptor (HMMR) from Homo sapiens (Human).